An 89-amino-acid chain; its full sequence is Small ribosomal subunit protein uS17A (89 aa).

This sequence belongs to the universal ribosomal protein uS17 family. Part of the 30S ribosomal subunit.

In terms of biological role, one of the primary rRNA binding proteins, it binds specifically to the 5'-end of 16S ribosomal RNA. This Bacteroides thetaiotaomicron (strain ATCC 29148 / DSM 2079 / JCM 5827 / CCUG 10774 / NCTC 10582 / VPI-5482 / E50) protein is Small ribosomal subunit protein uS17A.